The primary structure comprises 78 residues: Delta-conotoxin-like CVIE (78 aa).

Positions Met1–Ala22 are cleaved as a signal peptide. A propeptide spanning residues Asp23–Asn49 is cleaved from the precursor. 3 cysteine pairs are disulfide-bonded: Cys54/Cys69, Cys61/Cys73, and Cys68/Cys77. Pro65 is subject to 4-hydroxyproline.

The protein belongs to the conotoxin O1 superfamily. In terms of tissue distribution, expressed by the venom duct.

Its subcellular location is the secreted. Its function is as follows. Delta-conotoxins bind to site 6 of voltage-gated sodium channels (Nav) and inhibit the inactivation process. In Conus catus (Cat cone), this protein is Delta-conotoxin-like CVIE.